We begin with the raw amino-acid sequence, 794 residues long: uncharacterized protein (794 aa).

A run of 9 helical transmembrane segments spans residues 34 to 54 (FSAS…VFAV), 67 to 87 (ITAA…AHLI), 99 to 119 (MLAD…AFAS), 132 to 152 (LFLF…ADVT), 257 to 277 (VGPS…AMGL), 283 to 303 (LAWI…MFQL), 315 to 335 (WSVN…VLVF), 353 to 373 (LGAL…ATLF), and 421 to 441 (WTGT…LMGV).

Its subcellular location is the cell membrane. This is an uncharacterized protein from Corynebacterium glutamicum (strain ATCC 13032 / DSM 20300 / JCM 1318 / BCRC 11384 / CCUG 27702 / LMG 3730 / NBRC 12168 / NCIMB 10025 / NRRL B-2784 / 534).